A 197-amino-acid polypeptide reads, in one-letter code: MQKVVLATGNAGKVRELASLLSDFGLDVVAQTELGVDSAEETGLTFIENAILKARHAAKMTGLPAIADDSGLAVDVLGGAPGIYSARYSGENATDQQNLEKLLHTLRDVPDDKRQARFHCVLVYLRHAEDPTPIVCHGSWPGVITRQAAGNGGFGYDPIFFVPSEGKTAAELTREEKSAISHRGQALKLLLDALRNG.

Position 8–13 (Thr8–Lys13) interacts with substrate. Mg(2+) is bound by residues Glu40 and Asp69. Asp69 (proton acceptor) is an active-site residue. Substrate is bound by residues Ser70, Phe154 to Asp157, Lys177, and His182 to Arg183.

The protein belongs to the HAM1 NTPase family. As to quaternary structure, homodimer. The cofactor is Mg(2+).

The enzyme catalyses XTP + H2O = XMP + diphosphate + H(+). It catalyses the reaction dITP + H2O = dIMP + diphosphate + H(+). The catalysed reaction is ITP + H2O = IMP + diphosphate + H(+). Functionally, pyrophosphatase that catalyzes the hydrolysis of nucleoside triphosphates to their monophosphate derivatives, with a high preference for the non-canonical purine nucleotides XTP (xanthosine triphosphate), dITP (deoxyinosine triphosphate) and ITP. Seems to function as a house-cleaning enzyme that removes non-canonical purine nucleotides from the nucleotide pool, thus preventing their incorporation into DNA/RNA and avoiding chromosomal lesions. This chain is dITP/XTP pyrophosphatase (rdgB), found in Salmonella paratyphi A (strain ATCC 9150 / SARB42).